Reading from the N-terminus, the 534-residue chain is MKGGIADSWQREKLATMESPEEPGASMDENYFVNYTFKDRSHSGRVAQGIMKLCLEEELFADVTISVEGREFQLHRLVLSAQSCFFRSMFTSNLKEAHNRVIVLQDVSESVFQLLVDYIYHGTVKLRADELQEIYEVSDMYQLTSLFEECSRFLARTVQVGNCLQVMWLADRHSDPELYTAAKHCAKTHLAQLQSTEEFLHLPHHLLTDIISDGVPCSQNPTEAIEAWINFNKEEREAFAESLRTSLKEIGENVHIYLIGKESSRTHSLAVSLHCAEDDSISVSGQNSLCHQITAACKHGGDLYVVGGSIPRRMWKCNNATVDWEWCAPLPRDRLQHTLVSVPGKDAIYSLGGKTLQDTLSNAVIYYRVGDNVWTETTQLEVAVSGAAGANLNGIIYLLGGEENDLDFFTKPSRLIQCFDTETDKCHVKPYVLPFAGRMHAAVHKDLVFIVAEGDSLVCYNPLLDSFTRLCLPEAWSSAPSLWKIASCNGSIYVFRDRYKKGDANTYKLDPATSAVTVTRGIKVLLTNLQFVLA.

Residues 61 to 128 (ADVTISVEGR…IYHGTVKLRA (68 aa)) enclose the BTB domain. Positions 163 to 255 (CLQVMWLADR…SLKEIGENVH (93 aa)) constitute a BACK domain. Kelch repeat units lie at residues 255 to 301 (HIYL…KHGG), 302 to 344 (DLYV…SVPG), 347 to 394 (AIYS…NLNG), 396 to 446 (IYLL…VHKD), and 448 to 497 (VFIV…VFRD).

In terms of assembly, component of the BCR(KBTBD4) E3 ubiquitin ligase complex, at least composed of CUL3, KBTBD4 and RBX1.

Its function is as follows. Substrate-specific adapter of a BCR (BTB-CUL3-RBX1) E3 ubiquitin ligase complex which targets CoREST corepressor complex components RCOR1, KDM1A/LSD1 and HDAC2 for proteasomal degradation. RCOR1 is likely to be the primary target while degradation of KDM1A and HDAC2 is likely due to their association with RCOR1. Also targets RCOR3, MIER2 and MIER3 for proteasomal degradation as well as associated proteins ZNF217 and RREB1. Degradation is dependent on the presence of an ELM2 domain in the target proteins. The protein is Kelch repeat and BTB domain-containing protein 4 (Kbtbd4) of Mus musculus (Mouse).